A 386-amino-acid polypeptide reads, in one-letter code: Probable dual-specificity RNA methyltransferase RlmN (386 aa).

The Proton acceptor role is filled by E123. The Radical SAM core domain occupies 129 to 372 (YPTRTTLCIS…ATLRDTRGQD (244 aa)). C136 and C377 are joined by a disulfide. Residues C143, C147, and C150 each contribute to the [4Fe-4S] cluster site. Residues 198 to 199 (GE), S232, 255 to 257 (SLH), and N334 each bind S-adenosyl-L-methionine. C377 acts as the S-methylcysteine intermediate in catalysis.

This sequence belongs to the radical SAM superfamily. RlmN family. It depends on [4Fe-4S] cluster as a cofactor.

It localises to the cytoplasm. The enzyme catalyses adenosine(2503) in 23S rRNA + 2 reduced [2Fe-2S]-[ferredoxin] + 2 S-adenosyl-L-methionine = 2-methyladenosine(2503) in 23S rRNA + 5'-deoxyadenosine + L-methionine + 2 oxidized [2Fe-2S]-[ferredoxin] + S-adenosyl-L-homocysteine. It carries out the reaction adenosine(37) in tRNA + 2 reduced [2Fe-2S]-[ferredoxin] + 2 S-adenosyl-L-methionine = 2-methyladenosine(37) in tRNA + 5'-deoxyadenosine + L-methionine + 2 oxidized [2Fe-2S]-[ferredoxin] + S-adenosyl-L-homocysteine. Its function is as follows. Specifically methylates position 2 of adenine 2503 in 23S rRNA and position 2 of adenine 37 in tRNAs. The protein is Probable dual-specificity RNA methyltransferase RlmN of Bifidobacterium adolescentis (strain ATCC 15703 / DSM 20083 / NCTC 11814 / E194a).